The primary structure comprises 147 residues: Anti-sigma F factor (147 aa).

The protein belongs to the anti-sigma-factor family.

It carries out the reaction L-seryl-[protein] + ATP = O-phospho-L-seryl-[protein] + ADP + H(+). The enzyme catalyses L-threonyl-[protein] + ATP = O-phospho-L-threonyl-[protein] + ADP + H(+). In terms of biological role, binds to sigma F and blocks its ability to form an RNA polymerase holoenzyme (E-sigma F). Phosphorylates SpoIIAA on a serine residue. This phosphorylation may enable SpoIIAA to act as an anti-anti-sigma factor that counteracts SpoIIAB and thus releases sigma F from inhibition. This Heyndrickxia coagulans (Weizmannia coagulans) protein is Anti-sigma F factor.